We begin with the raw amino-acid sequence, 1160 residues long: Pesticidal crystal protein Cry1Db (1160 aa).

This sequence belongs to the delta endotoxin family.

In terms of biological role, promotes colloidosmotic lysis by binding to the midgut epithelial cells of insects. This is Pesticidal crystal protein Cry1Db (cry1Db) from Bacillus thuringiensis.